We begin with the raw amino-acid sequence, 141 residues long: Ribosome-binding factor A (141 aa).

Belongs to the RbfA family. As to quaternary structure, monomer. Binds 30S ribosomal subunits, but not 50S ribosomal subunits or 70S ribosomes.

Its subcellular location is the cytoplasm. Its function is as follows. One of several proteins that assist in the late maturation steps of the functional core of the 30S ribosomal subunit. Associates with free 30S ribosomal subunits (but not with 30S subunits that are part of 70S ribosomes or polysomes). Required for efficient processing of 16S rRNA. May interact with the 5'-terminal helix region of 16S rRNA. The chain is Ribosome-binding factor A from Beijerinckia indica subsp. indica (strain ATCC 9039 / DSM 1715 / NCIMB 8712).